Here is a 40-residue protein sequence, read N- to C-terminus: Antifungal protein ginkbilobin-1 (40 aa).

The Gnk2-homologous domain maps to 3–40; it reads TAFVSSAHNTQKIPAGAPFNRNLRAMLADLRQNAAFAG. N11 is an alpha-D-mannopyranose binding site.

As to expression, expressed in seeds (at the protein level).

Functionally, possesses antifungal activity against B.cinerea, M.arachidicola, F.oxysporum, R.solani and C.comatus and moderate antibacterial activity against S.aureus, P.aeruginosa and E.coli. Inhibits HIV-1 reverse transcriptase and proliferation of murine splenocytes. Exerts antifungal activity through its carbohydrate-binding specificity. The protein is Antifungal protein ginkbilobin-1 of Ginkgo biloba (Ginkgo).